Here is a 483-residue protein sequence, read N- to C-terminus: Regulatory protein ViaA (483 aa).

Belongs to the ViaA family. Homodimer. Interacts with RavA.

It localises to the cytoplasm. Functionally, component of the RavA-ViaA chaperone complex, which may act on the membrane to optimize the function of some of the respiratory chains. ViaA stimulates the ATPase activity of RavA. The sequence is that of Regulatory protein ViaA from Escherichia coli O1:K1 / APEC.